A 395-amino-acid chain; its full sequence is Probable L-tyrosine/L-aspartate decarboxylase (395 aa).

The residue at position 242 (Lys242) is an N6-(pyridoxal phosphate)lysine.

Belongs to the group II decarboxylase family. MfnA subfamily. Pyridoxal 5'-phosphate is required as a cofactor.

It catalyses the reaction L-tyrosine + H(+) = tyramine + CO2. The enzyme catalyses L-aspartate + H(+) = beta-alanine + CO2. It participates in cofactor biosynthesis; methanofuran biosynthesis. It functions in the pathway cofactor biosynthesis; coenzyme A biosynthesis. Catalyzes the decarboxylation of L-tyrosine to produce tyramine for methanofuran biosynthesis. Can also catalyze the decarboxylation of L-aspartate to produce beta-alanine for coenzyme A (CoA) biosynthesis. The polypeptide is Probable L-tyrosine/L-aspartate decarboxylase (Methanosarcina acetivorans (strain ATCC 35395 / DSM 2834 / JCM 12185 / C2A)).